A 236-amino-acid polypeptide reads, in one-letter code: Sugar fermentation stimulation protein homolog (236 aa).

The protein belongs to the SfsA family.

The sequence is that of Sugar fermentation stimulation protein homolog from Desulfotalea psychrophila (strain LSv54 / DSM 12343).